Here is a 208-residue protein sequence, read N- to C-terminus: TnpB-like protein MJ0012 (208 aa).

Positions 83, 86, 100, and 103 each coordinate Zn(2+).

It belongs to the transposase 35 family.

This Methanocaldococcus jannaschii (strain ATCC 43067 / DSM 2661 / JAL-1 / JCM 10045 / NBRC 100440) (Methanococcus jannaschii) protein is TnpB-like protein MJ0012.